An 83-amino-acid chain; its full sequence is Kappa-theraphotoxin-Cg2b (83 aa).

Positions 1–21 (MKGSAFAIILGLVVLCACSFA) are cleaved as a signal peptide. A propeptide spanning residues 22–53 (EDEQDQFASPNELLRSMFLESRHELIPEVEGR) is cleaved from the precursor. Cystine bridges form between C55–C69, C62–C74, and C68–C78.

Belongs to the neurotoxin 30 (phrixotoxin) family. As to expression, expressed by the venom gland.

It localises to the secreted. Functionally, probable ion channel inhibitor. The polypeptide is Kappa-theraphotoxin-Cg2b (Chilobrachys guangxiensis (Chinese earth tiger tarantula)).